Reading from the N-terminus, the 441-residue chain is tRNA modification GTPase MnmE (441 aa).

R24, E81, and K121 together coordinate (6S)-5-formyl-5,6,7,8-tetrahydrofolate. Positions 218–366 (GMVVAIAGPP…LLRELTRFAA (149 aa)) constitute a TrmE-type G domain. Residues 228–233 (NVGKST), 247–253 (SPHAGTT), and 272–275 (DTAG) each bind GTP. 2 residues coordinate Mg(2+): S232 and T253. K441 provides a ligand contact to (6S)-5-formyl-5,6,7,8-tetrahydrofolate.

It belongs to the TRAFAC class TrmE-Era-EngA-EngB-Septin-like GTPase superfamily. TrmE GTPase family. Homodimer. Heterotetramer of two MnmE and two MnmG subunits. K(+) serves as cofactor.

Its subcellular location is the cytoplasm. Functionally, exhibits a very high intrinsic GTPase hydrolysis rate. Involved in the addition of a carboxymethylaminomethyl (cmnm) group at the wobble position (U34) of certain tRNAs, forming tRNA-cmnm(5)s(2)U34. This chain is tRNA modification GTPase MnmE, found in Rhodopseudomonas palustris (strain ATCC BAA-98 / CGA009).